We begin with the raw amino-acid sequence, 444 residues long: Gentisate transporter (444 aa).

The next 12 helical transmembrane spans lie at 42–64 (AAVL…YGTV), 79–101 (LGTI…GRLS), 108–127 (AAVI…CAFA), 131–153 (WVFG…SVNA), 166–188 (AWAT…LALV), 198–220 (WRFM…MKVI), 252–274 (WISI…LGTW), 289–311 (ALMF…AWAG), 318–340 (RSGV…YPPV), 344–366 (YVIL…AAVA), 378–400 (LGWA…GLLL), and 410–428 (FIMF…SVLL).

It belongs to the major facilitator superfamily. Aromatic acid:H(+) symporter (AAHS) (TC 2.A.1.15) family.

Its subcellular location is the cell membrane. In terms of biological role, transport of gentisate (2,5-dihydroxybenzoate) into the cell. Does not transport 3-hydroxybenzoate or benzoate. In Corynebacterium glutamicum (strain ATCC 13032 / DSM 20300 / JCM 1318 / BCRC 11384 / CCUG 27702 / LMG 3730 / NBRC 12168 / NCIMB 10025 / NRRL B-2784 / 534), this protein is Gentisate transporter (genK).